The following is a 250-amino-acid chain: tRNA-specific adenosine deaminase subunit TAD2 (250 aa).

In terms of domain architecture, CMP/dCMP-type deaminase spans 1–119; the sequence is MQHIKHMRTA…ERFGGNGTVL (119 aa). Residue H54 coordinates Zn(2+). Residue E56 is the Proton donor of the active site. C88 and C91 together coordinate Zn(2+).

This sequence belongs to the cytidine and deoxycytidylate deaminase family. ADAT2 subfamily. In terms of assembly, heterodimer with TAD3. It depends on Zn(2+) as a cofactor.

Its subcellular location is the cytoplasm. It localises to the nucleus. The catalysed reaction is adenosine(34) in tRNA + H2O + H(+) = inosine(34) in tRNA + NH4(+). In terms of biological role, structural subunit of tRNA-specific adenosine deaminase, which deaminates adenosine-34 (the first, also called wobble position of the anticodon) to inosine in many tRNAs. Inosine-34 allows the decoding of 3 different nucleotides at the third position of mRNA codons, as inosine is able to pair with U, C, and A. The chain is tRNA-specific adenosine deaminase subunit TAD2 (TAD2) from Saccharomyces cerevisiae (strain ATCC 204508 / S288c) (Baker's yeast).